Here is a 38-residue protein sequence, read N- to C-terminus: MKVRASVKKICDKCKVIKRKGTVRIICPANPRHKQRQG.

It belongs to the bacterial ribosomal protein bL36 family.

This is Large ribosomal subunit protein bL36 from Anaeromyxobacter dehalogenans (strain 2CP-1 / ATCC BAA-258).